We begin with the raw amino-acid sequence, 507 residues long: MSFLNINRFHILCFFLWQFGLFYACQLIFPIFYNFHPGLSCEDPGFNFSKPKCKLSKVEICTELTANCSKWHIEPAPFHSMVQDFKMFCGTKAYDSAWIATIQFIGALVGALVYGHLGDHFGRKPVSFVGISIGIIFGVASGFAPSWEVFAVLLFICGTSVACIMIVFYAYILEFIEPEQRVFLRTFFNWGYARLVFTLVCFICGYWRSAAIATSLLALPILPVLLWLPESPKWYATKNRFQEMKEAEKKISWLSGISYVEREDRRTEKIEEKDTKVYTIRDLFSSWPIAYSTIVVGSLWFSTSVSSFGADLNSGNLAGNFYLSQFVQAAAIALSKLSIFLLDLFIPSFNRQRLHQVPQIIMIACYTTIMALMISPDSDCSSQGSRNLAIIIINIIGTSFIELTWDACYLVAAEIFPTRIRTIGIGTCSLLARIGALLAPQMAYLSEIYPPIPYIIVCSIGIISLLISCFFLPDTKGVDLGALDRNPLEESGDNKEEEISEIQIGTN.

Helical transmembrane passes span 11–31, 97–117, 125–145, 149–169, 187–207, 209–229, 283–303, 326–346, 354–374, 388–408, 423–443, and 452–472; these read ILCF…IFPI, AWIA…YGHL, PVSF…GFAP, VFAV…IVFY, FFNW…CGYW, SAAI…LWLP, LFSS…WFST, FVQA…DLFI, LHQV…ALMI, LAII…WDAC, IGIG…PQMA, and IPYI…CFFL.

It belongs to the major facilitator superfamily.

Its subcellular location is the membrane. This is an uncharacterized protein from Caenorhabditis elegans.